Consider the following 558-residue polypeptide: Dihydroxy-acid dehydratase (558 aa).

A Mg(2+)-binding site is contributed by aspartate 78. Residue cysteine 119 participates in [2Fe-2S] cluster binding. The Mg(2+) site is built by aspartate 120 and lysine 121. Position 121 is an N6-carboxylysine (lysine 121). Cysteine 192 provides a ligand contact to [2Fe-2S] cluster. Glutamate 446 serves as a coordination point for Mg(2+). The Proton acceptor role is filled by serine 472.

This sequence belongs to the IlvD/Edd family. Homodimer. The cofactor is [2Fe-2S] cluster. Requires Mg(2+) as cofactor.

It carries out the reaction (2R)-2,3-dihydroxy-3-methylbutanoate = 3-methyl-2-oxobutanoate + H2O. The enzyme catalyses (2R,3R)-2,3-dihydroxy-3-methylpentanoate = (S)-3-methyl-2-oxopentanoate + H2O. Its pathway is amino-acid biosynthesis; L-isoleucine biosynthesis; L-isoleucine from 2-oxobutanoate: step 3/4. It functions in the pathway amino-acid biosynthesis; L-valine biosynthesis; L-valine from pyruvate: step 3/4. Functions in the biosynthesis of branched-chain amino acids. Catalyzes the dehydration of (2R,3R)-2,3-dihydroxy-3-methylpentanoate (2,3-dihydroxy-3-methylvalerate) into 2-oxo-3-methylpentanoate (2-oxo-3-methylvalerate) and of (2R)-2,3-dihydroxy-3-methylbutanoate (2,3-dihydroxyisovalerate) into 2-oxo-3-methylbutanoate (2-oxoisovalerate), the penultimate precursor to L-isoleucine and L-valine, respectively. The chain is Dihydroxy-acid dehydratase from Campylobacter jejuni subsp. jejuni serotype O:23/36 (strain 81-176).